We begin with the raw amino-acid sequence, 434 residues long: Pectate lyase (434 aa).

The N-terminal stretch at 1-22 (MKAAQFFLYSLLFFASAALSSA) is a signal peptide. N-linked (GlcNAc...) asparagine glycans are attached at residues asparagine 68 and asparagine 97. Ca(2+)-binding residues include aspartate 232, aspartate 256, and aspartate 260. Arginine 312 is a catalytic residue.

This sequence belongs to the polysaccharide lyase 1 family. Requires Ca(2+) as cofactor.

It catalyses the reaction Eliminative cleavage of (1-&gt;4)-alpha-D-galacturonan to give oligosaccharides with 4-deoxy-alpha-D-galact-4-enuronosyl groups at their non-reducing ends.. It functions in the pathway glycan metabolism; pectin degradation; 2-dehydro-3-deoxy-D-gluconate from pectin: step 2/5. This is Pectate lyase from Lilium longiflorum (Trumpet lily).